We begin with the raw amino-acid sequence, 406 residues long: Succinylornithine transaminase (406 aa).

Lys-252 is modified (N6-(pyridoxal phosphate)lysine).

The protein belongs to the class-III pyridoxal-phosphate-dependent aminotransferase family. AstC subfamily. The cofactor is pyridoxal 5'-phosphate.

The catalysed reaction is N(2)-succinyl-L-ornithine + 2-oxoglutarate = N-succinyl-L-glutamate 5-semialdehyde + L-glutamate. Its pathway is amino-acid degradation; L-arginine degradation via AST pathway; L-glutamate and succinate from L-arginine: step 3/5. Functionally, catalyzes the transamination of N(2)-succinylornithine and alpha-ketoglutarate into N(2)-succinylglutamate semialdehyde and glutamate. Can also act as an acetylornithine aminotransferase. The sequence is that of Succinylornithine transaminase from Shigella sonnei (strain Ss046).